Consider the following 353-residue polypeptide: Replication factor C subunit 2 (353 aa).

An N-acetylmethionine modification is found at M1. Residues V28, R32, 65 to 73 (GPPGTGKTS), N171, and R229 each bind ATP.

It belongs to the activator 1 small subunits family. Replication factor C (RFC) is a heteropentamer of subunits RFC1, RFC2, RFC3, RFC4 and RFC5 and forms a complex with POL30/PCNA in the presence of ATP. Component of the RAD24-RFC complex which consists of RAD14, RFC2, RFC3, RFC4 and RFC5 and associates with the checkpoint clamp DDC1:MEC3:RAD17 complex. Component of the ELG1-RFC complex which consists of ELG1, RFC2, RFC3, RFC4 and RFC5. Component of the CTF18-RFC complex, which consists of CTF18, CTF8, DCC1, RFC2, RFC3, RFC4 and RFC5. RFC2 interacts with ECO1.

It localises to the nucleus. Component of ATP-dependent clamp loader (RFC and RFC-like) complexes for DNA clamps, such as the POL30/PCNA homotrimer and the checkpoint clamp DDC1:MEC3:RAD17 complex. During a clamp loading circle, the RFC:clamp complex binds to DNA and the recognition of the double-stranded/single-stranded junction stimulates ATP hydrolysis by RFC. The complex presumably provides bipartite ATP sites in which one subunit supplies a catalytic site for hydrolysis of ATP bound to the neighboring subunit. Dissociation of RFC from the clamp leaves the clamp encircling DNA. Component of the replication factor C (RFC or activator 1) complex which loads POL30/PCNA and acts during elongation of primed DNA templates by DNA polymerase delta and epsilon. RFC has an essential but redundant activity in sister chromatid cohesion establishment. Component of the RFC-like complex CTF18-RFC which is required for efficient establishment of chromosome cohesion during S-phase and may load or unload POL30/PCNA. Component of the RFC-like RAD24-RFC complex which loads the checkpoint clamp DDC1:MEC3:RAD17 complex and is involved in DNA repair pathways. Component of the RFC-like ELG1-RFC complex which appears to have a role in DNA replication, replication fork re-start, recombination and repair. RFC2 binds ATP and single-stranded DNA. The protein is Replication factor C subunit 2 (RFC2) of Saccharomyces cerevisiae (strain ATCC 204508 / S288c) (Baker's yeast).